The chain runs to 286 residues: Nucleotide-binding protein PLES_48441 (286 aa).

Residue 8–15 participates in ATP binding; that stretch reads GRSGSGKS. Residue 60–63 coordinates GTP; that stretch reads DARN.

Belongs to the RapZ-like family.

Displays ATPase and GTPase activities. This chain is Nucleotide-binding protein PLES_48441, found in Pseudomonas aeruginosa (strain LESB58).